The following is a 793-amino-acid chain: Pentatricopeptide repeat-containing protein At1g03100, mitochondrial (793 aa).

The N-terminal 87 residues, M1–S87, are a transit peptide targeting the mitochondrion. 11 PPR repeats span residues N257–A291, D292–A322, F330–A364, T458–V492, D495–T529, G530–L564, D565–R599, G601–V631, G637–P671, N672–T707, and D713–V747.

The protein belongs to the PPR family. P subfamily.

It is found in the mitochondrion. The chain is Pentatricopeptide repeat-containing protein At1g03100, mitochondrial from Arabidopsis thaliana (Mouse-ear cress).